Here is a 425-residue protein sequence, read N- to C-terminus: Adenosylhomocysteinase (425 aa).

3 residues coordinate substrate: Thr60, Asp132, and Glu157. Residue 158-160 participates in NAD(+) binding; it reads TTT. Substrate-binding residues include Lys187 and Asp191. Residues Asn192, 221–226, Glu244, Asn279, 300–302, and Asn347 contribute to the NAD(+) site; these read GYGWCG and SGH.

Belongs to the adenosylhomocysteinase family. NAD(+) is required as a cofactor.

It localises to the cytoplasm. The catalysed reaction is S-adenosyl-L-homocysteine + H2O = L-homocysteine + adenosine. It participates in amino-acid biosynthesis; L-homocysteine biosynthesis; L-homocysteine from S-adenosyl-L-homocysteine: step 1/1. May play a key role in the regulation of the intracellular concentration of adenosylhomocysteine. This chain is Adenosylhomocysteinase, found in Nostoc sp. (strain PCC 7120 / SAG 25.82 / UTEX 2576).